Consider the following 362-residue polypeptide: S-adenosylmethionine:tRNA ribosyltransferase-isomerase (362 aa).

Belongs to the QueA family. In terms of assembly, monomer.

The protein localises to the cytoplasm. It carries out the reaction 7-aminomethyl-7-carbaguanosine(34) in tRNA + S-adenosyl-L-methionine = epoxyqueuosine(34) in tRNA + adenine + L-methionine + 2 H(+). The protein operates within tRNA modification; tRNA-queuosine biosynthesis. Transfers and isomerizes the ribose moiety from AdoMet to the 7-aminomethyl group of 7-deazaguanine (preQ1-tRNA) to give epoxyqueuosine (oQ-tRNA). The polypeptide is S-adenosylmethionine:tRNA ribosyltransferase-isomerase (Yersinia enterocolitica serotype O:8 / biotype 1B (strain NCTC 13174 / 8081)).